Reading from the N-terminus, the 152-residue chain is Aspartate carbamoyltransferase regulatory chain (152 aa).

Residues C108, C113, C137, and C140 each contribute to the Zn(2+) site.

This sequence belongs to the PyrI family. Contains catalytic and regulatory chains. Zn(2+) is required as a cofactor.

In terms of biological role, involved in allosteric regulation of aspartate carbamoyltransferase. The polypeptide is Aspartate carbamoyltransferase regulatory chain (Neisseria meningitidis serogroup A / serotype 4A (strain DSM 15465 / Z2491)).